Consider the following 429-residue polypeptide: 3-phosphoshikimate 1-carboxyvinyltransferase (429 aa).

3-phosphoshikimate-binding residues include Lys11, Ser12, and Arg16. Phosphoenolpyruvate is bound at residue Lys11. Phosphoenolpyruvate is bound by residues Gly82 and Arg110. 3-phosphoshikimate contacts are provided by Ser155, Gln157, Asp302, and Lys329. Gln157 is a binding site for phosphoenolpyruvate. Catalysis depends on Asp302, which acts as the Proton acceptor. Residues Arg333 and Arg385 each contribute to the phosphoenolpyruvate site.

This sequence belongs to the EPSP synthase family. In terms of assembly, monomer.

It localises to the cytoplasm. The catalysed reaction is 3-phosphoshikimate + phosphoenolpyruvate = 5-O-(1-carboxyvinyl)-3-phosphoshikimate + phosphate. It participates in metabolic intermediate biosynthesis; chorismate biosynthesis; chorismate from D-erythrose 4-phosphate and phosphoenolpyruvate: step 6/7. In terms of biological role, catalyzes the transfer of the enolpyruvyl moiety of phosphoenolpyruvate (PEP) to the 5-hydroxyl of shikimate-3-phosphate (S3P) to produce enolpyruvyl shikimate-3-phosphate and inorganic phosphate. The chain is 3-phosphoshikimate 1-carboxyvinyltransferase from Helicobacter pylori (strain G27).